The chain runs to 561 residues: Magnesium-chelatase 60 kDa subunit (561 aa).

Disordered stretches follow at residues 234 to 268 (PLQEAPPPPPPPPEPPEPNEGENQQDEQDQIDPLD) and 298 to 324 (RAASGGQGAGQEQIGNRRGRPLPSRKG). Pro residues predominate over residues 237-249 (EAPPPPPPPPEPP). Positions 250-265 (EPNEGENQQDEQDQID) are enriched in acidic residues. Residues 314–323 (RRGRPLPSRK) are compositionally biased toward basic residues. A VWFA domain is found at 379-559 (VLIFAVDASG…KMADVLGAAL (181 aa)).

It belongs to the Mg-chelatase subunits D/I family.

The enzyme catalyses protoporphyrin IX + Mg(2+) + ATP + H2O = Mg-protoporphyrin IX + ADP + phosphate + 3 H(+). It functions in the pathway porphyrin-containing compound metabolism; bacteriochlorophyll biosynthesis. In terms of biological role, involved in bacteriochlorophyll biosynthesis; introduces a magnesium ion into protoporphyrin IX to yield Mg-protoporphyrin IX. This is Magnesium-chelatase 60 kDa subunit (bchD) from Rhodobacter capsulatus (strain ATCC BAA-309 / NBRC 16581 / SB1003).